Reading from the N-terminus, the 106-residue chain is ATP-dependent Clp protease adapter protein ClpS (106 aa).

This sequence belongs to the ClpS family. In terms of assembly, binds to the N-terminal domain of the chaperone ClpA.

Functionally, involved in the modulation of the specificity of the ClpAP-mediated ATP-dependent protein degradation. This is ATP-dependent Clp protease adapter protein ClpS from Escherichia fergusonii (strain ATCC 35469 / DSM 13698 / CCUG 18766 / IAM 14443 / JCM 21226 / LMG 7866 / NBRC 102419 / NCTC 12128 / CDC 0568-73).